Here is a 613-residue protein sequence, read N- to C-terminus: Probable potassium transport system protein Kup 1 (613 aa).

The next 12 membrane-spanning stretches (helical) occupy residues 40–60 (VLSM…VVFV), 93–113 (MLLG…TPAI), 127–147 (PALQ…LFLL), 158–178 (LFGP…LFSV), 201–221 (AVQA…AEAL), 237–257 (WFYI…ALLL), 266–286 (PFFL…ATAA), 288–308 (VIAS…AVHL), 327–347 (IYVP…VLAF), 356–376 (AYGI…TVVM), 384–404 (LPAV…FFGA), and 409–429 (VAAG…LMVT).

It belongs to the HAK/KUP transporter (TC 2.A.72) family.

It localises to the cell inner membrane. The catalysed reaction is K(+)(in) + H(+)(in) = K(+)(out) + H(+)(out). Functionally, transport of potassium into the cell. Likely operates as a K(+):H(+) symporter. The sequence is that of Probable potassium transport system protein Kup 1 from Ralstonia nicotianae (strain ATCC BAA-1114 / GMI1000) (Ralstonia solanacearum).